An 821-amino-acid polypeptide reads, in one-letter code: Glycerol-3-phosphate acyltransferase (821 aa).

Positions 310–315 match the HXXXXD motif motif; that stretch reads CHRSHM.

It belongs to the GPAT/DAPAT family.

It localises to the cell membrane. It catalyses the reaction sn-glycerol 3-phosphate + an acyl-CoA = a 1-acyl-sn-glycero-3-phosphate + CoA. Its pathway is phospholipid metabolism; CDP-diacylglycerol biosynthesis; CDP-diacylglycerol from sn-glycerol 3-phosphate: step 1/3. The protein is Glycerol-3-phosphate acyltransferase of Baumannia cicadellinicola subsp. Homalodisca coagulata.